The sequence spans 206 residues: Sclerostin domain-containing protein 1 (206 aa).

The first 23 residues, Met-1 to Ala-23, serve as a signal peptide directing secretion. Asn-47 carries an N-linked (GlcNAc...) asparagine glycan. 4 disulfides stabilise this stretch: Cys-75-Cys-133, Cys-89-Cys-147, Cys-100-Cys-163, and Cys-104-Cys-165. The 96-residue stretch at Cys-75–Arg-170 folds into the CTCK domain. Asn-173 is a glycosylation site (N-linked (GlcNAc...) asparagine). The tract at residues Glu-174 to Ser-206 is disordered. Residues Val-188–Ser-206 show a composition bias toward basic residues.

It belongs to the sclerostin family. As to quaternary structure, interacts with BMP2, BMP4, BMP6 and BMP7 with high affinity. Highly expressed in kidney and weakly in lung.

The protein resides in the secreted. Its function is as follows. May be involved in the onset of endometrial receptivity for implantation/sensitization for the decidual cell reaction Enhances Wnt signaling and inhibits TGF-beta signaling. Directly antagonizes activity of BMP2, BMP4, BMP6 and BMP7 in a dose-dependent manner. The sequence is that of Sclerostin domain-containing protein 1 (SOSTDC1) from Homo sapiens (Human).